The sequence spans 823 residues: Leucine--tRNA ligase (823 aa).

A 'HIGH' region motif is present at residues 42–52 (PYPSGTLHMGH). A 'KMSKS' region motif is present at residues 575 to 579 (KMSKS). An ATP-binding site is contributed by lysine 578.

The protein belongs to the class-I aminoacyl-tRNA synthetase family.

The protein resides in the cytoplasm. It catalyses the reaction tRNA(Leu) + L-leucine + ATP = L-leucyl-tRNA(Leu) + AMP + diphosphate. The polypeptide is Leucine--tRNA ligase (Legionella pneumophila subsp. pneumophila (strain Philadelphia 1 / ATCC 33152 / DSM 7513)).